Reading from the N-terminus, the 912-residue chain is Non-lysosomal glucosylceramidase (912 aa).

Residues 886-912 are disordered; that stretch reads HKKNSSRPAVTQGTAPSQPECGPKRSL. Residues 891-902 show a composition bias toward polar residues; it reads SRPAVTQGTAPS.

Belongs to the non-lysosomal glucosylceramidase family.

Its subcellular location is the endoplasmic reticulum membrane. It localises to the golgi apparatus membrane. It carries out the reaction a beta-D-glucosyl-(1&lt;-&gt;1')-N-acylsphing-4-enine + H2O = an N-acylsphing-4-enine + D-glucose. The catalysed reaction is a beta-D-galactosyl-(1&lt;-&gt;1')-N-acylsphing-4-enine + H2O = an N-acylsphing-4-enine + D-galactose. It catalyses the reaction beta-D-glucosyl-(1-&gt;3)-O-lithocholate + H2O = lithocholate + D-glucose. The enzyme catalyses beta-D-glucosyl-(1-&gt;3)-O-chenodeoxycholate + H2O = chenodeoxycholate + D-glucose. It carries out the reaction a di-trans,poly-cis-dolichyl beta-D-glucosyl phosphate + chenodeoxycholate = beta-D-glucosyl-(1-&gt;3)-O-chenodeoxycholate + a di-trans,poly-cis-dolichyl phosphate + H(+). The catalysed reaction is octyl beta-D-glucose + chenodeoxycholate = beta-D-glucosyl-(1-&gt;3)-O-chenodeoxycholate + octan-1-ol. It catalyses the reaction cholesteryl 3-beta-D-glucoside + H2O = cholesterol + D-glucose. The enzyme catalyses a beta-D-glucosyl-(1&lt;-&gt;1')-N-acylsphing-4-enine + cholesterol = cholesteryl 3-beta-D-glucoside + an N-acylsphing-4-enine. It carries out the reaction beta-D-glucosyl-N-(9Z-octadecenoyl)-sphing-4E-enine + cholesterol = N-(9Z-octadecenoyl)-sphing-4-enine + cholesteryl 3-beta-D-glucoside. The catalysed reaction is a beta-D-galactosyl-(1&lt;-&gt;1')-N-acylsphing-4-enine + cholesterol = cholesteryl 3-beta-D-galactoside + an N-acylsphing-4-enine. It catalyses the reaction 1-(beta-D-galactosyl)-N-dodecanoylsphing-4-enine + cholesterol = cholesteryl 3-beta-D-galactoside + N-dodecanoylsphing-4-enine. The protein operates within lipid metabolism; sphingolipid metabolism. It functions in the pathway steroid metabolism; cholesterol metabolism. Enzymatic activity is dependent on membrane association and requires the presence of lipids. Its function is as follows. Non-lysosomal glucosylceramidase that catalyzes the hydrolysis of glucosylceramides/GlcCers (such as beta-D-glucosyl-(1&lt;-&gt;1')-N-acylsphing-4-enine) to free glucose and ceramides (such as N-acylsphing-4-enine). GlcCers are membrane glycosphingolipids that have a wide intracellular distribution. They are the main precursors of more complex glycosphingolipids that play a role in cellular growth, differentiation, adhesion, signaling, cytoskeletal dynamics and membrane properties. Involved in the transglucosylation of cholesterol, transfers glucose from GlcCer to cholesterol, thereby modifying its water solubility and biological properties. Under specific conditions, may catalyze the reverse reaction, transferring glucose from cholesteryl-3-beta-D-glucoside to ceramide (such as N-acylsphing-4-enine). May play a role in the metabolism of bile acids. Able to hydrolyze bile acid 3-O-glucosides as well as to produce bile acid-glucose conjugates thanks to a bile acid glucosyl transferase activity. Catalyzes the hydrolysis of galactosylceramides/GalCers (such as beta-D-galactosyl-(1&lt;-&gt;1')-N-acylsphing-4-enine), as well as the galactosyl transfer between GalCers and cholesterol in vitro with lower activity compared with their activity against GlcCers. The sequence is that of Non-lysosomal glucosylceramidase from Rattus norvegicus (Rat).